Here is a 209-residue protein sequence, read N- to C-terminus: UPF0502 protein PSHAa0076 (209 aa).

The protein belongs to the UPF0502 family.

This chain is UPF0502 protein PSHAa0076, found in Pseudoalteromonas translucida (strain TAC 125).